Reading from the N-terminus, the 152-residue chain is MFRGASAINLDTKGRIAIPVRYREPLQLEHQGRIVITVDIQSACLLLYPLHEWELIEAKLLKLSDTDKTQRSLKRMLLGYAHEVELDGNGRILLPPPLRQYANLDKRIMLVGQLNKFELWDEQAWLQQIDECQETIRSEELANNERLADFSL.

2 consecutive SpoVT-AbrB domains span residues 5–52 and 81–124; these read ASAI…PLHE and AHEV…DEQA.

Belongs to the MraZ family. As to quaternary structure, forms oligomers.

It is found in the cytoplasm. Its subcellular location is the nucleoid. The polypeptide is Transcriptional regulator MraZ (Shewanella sp. (strain MR-7)).